Here is a 248-residue protein sequence, read N- to C-terminus: 3-deoxy-manno-octulosonate cytidylyltransferase (248 aa).

This sequence belongs to the KdsB family.

It is found in the cytoplasm. It carries out the reaction 3-deoxy-alpha-D-manno-oct-2-ulosonate + CTP = CMP-3-deoxy-beta-D-manno-octulosonate + diphosphate. Its pathway is nucleotide-sugar biosynthesis; CMP-3-deoxy-D-manno-octulosonate biosynthesis; CMP-3-deoxy-D-manno-octulosonate from 3-deoxy-D-manno-octulosonate and CTP: step 1/1. The protein operates within bacterial outer membrane biogenesis; lipopolysaccharide biosynthesis. Its function is as follows. Activates KDO (a required 8-carbon sugar) for incorporation into bacterial lipopolysaccharide in Gram-negative bacteria. The protein is 3-deoxy-manno-octulosonate cytidylyltransferase of Chlorobaculum tepidum (strain ATCC 49652 / DSM 12025 / NBRC 103806 / TLS) (Chlorobium tepidum).